Reading from the N-terminus, the 124-residue chain is Large ribosomal subunit protein bL12 (124 aa).

It belongs to the bacterial ribosomal protein bL12 family. Homodimer. Part of the ribosomal stalk of the 50S ribosomal subunit. Forms a multimeric L10(L12)X complex, where L10 forms an elongated spine to which 2 to 4 L12 dimers bind in a sequential fashion. Binds GTP-bound translation factors.

Forms part of the ribosomal stalk which helps the ribosome interact with GTP-bound translation factors. Is thus essential for accurate translation. This Aromatoleum aromaticum (strain DSM 19018 / LMG 30748 / EbN1) (Azoarcus sp. (strain EbN1)) protein is Large ribosomal subunit protein bL12.